The sequence spans 232 residues: MHITKLVLIRHGESQWNKENRFTGWVDVDLSEKGRSEAQCAGRILKKNGFFFNYGYTSVLKRAIHTLWIILDQLDQAWLPIEKSWRLNERHYGALQGLNKDEAIKEYGYKTIQKWRRSFNVIPPNICGGNNQFIATNDNRYANISTDELPSSESLELTLKRVIPYWNQSIIPHIKKGQTIIIVAHGNSIRAIIKFLNHLNESEIFQINVPTGVPLIYEFDKKANTVQHYYLK.

Residues 10–17, 23–24, R62, 89–92, K100, 116–117, and 186–187 contribute to the substrate site; these read RHGESQWN, TG, ERHY, RR, and GN. The active-site Tele-phosphohistidine intermediate is the H11. E89 serves as the catalytic Proton donor/acceptor.

Belongs to the phosphoglycerate mutase family. BPG-dependent PGAM subfamily. Homodimer.

The catalysed reaction is (2R)-2-phosphoglycerate = (2R)-3-phosphoglycerate. It functions in the pathway carbohydrate degradation; glycolysis; pyruvate from D-glyceraldehyde 3-phosphate: step 3/5. Catalyzes the interconversion of 2-phosphoglycerate and 3-phosphoglycerate. The polypeptide is 2,3-bisphosphoglycerate-dependent phosphoglycerate mutase (Blochmanniella pennsylvanica (strain BPEN)).